The primary structure comprises 151 residues: Large ribosomal subunit protein eL8 (151 aa).

This sequence belongs to the eukaryotic ribosomal protein eL8 family. As to quaternary structure, part of the 50S ribosomal subunit. Probably part of the RNase P complex.

It is found in the cytoplasm. In terms of biological role, multifunctional RNA-binding protein that recognizes the K-turn motif in ribosomal RNA, the RNA component of RNase P, box H/ACA, box C/D and box C'/D' sRNAs. The sequence is that of Large ribosomal subunit protein eL8 from Pyrobaculum aerophilum (strain ATCC 51768 / DSM 7523 / JCM 9630 / CIP 104966 / NBRC 100827 / IM2).